Here is a 147-residue protein sequence, read N- to C-terminus: Myosin-ID light chain (147 aa).

EF-hand domains lie at 8 to 43, 79 to 114, and 115 to 147; these read EAQS…LGQN, FDEK…LGER, and LPEE…MLKK. Ca(2+) contacts are provided by Asp-21, Asn-23, Asp-25, Lys-27, and Glu-32.

As to quaternary structure, myosin I is a dimer of a heavy and a light chain. Inability to self-assemble into filaments. Interacts with myoD. Does not interact with myoB or myoC.

It is found in the cytoplasm. Functions as the light chain for myosin-D. Has low affinity for calcium. The protein is Myosin-ID light chain (mlcD) of Dictyostelium discoideum (Social amoeba).